A 542-amino-acid polypeptide reads, in one-letter code: uncharacterized protein (542 aa).

Transmembrane regions (helical) follow at residues 4–23 (FVENQLLALVAIMGIGLLLG), 28–47 (FGFRLGVAAVLFVGLAFSTI), 51–70 (ITVPPLIYVVGLALFVYTIG), 91–113 (LALGAIIATTAIAWVVIKALGLA), and 160–182 (YSLTYPLGVLVVILTIAVCGGLF). RCK C-terminal domains are found at residues 190-272 (AKNA…LLGE) and 274-355 (VDGH…IFGD). 5 helical membrane passes run 363-385 (FNLVPLVVGLSLGVLVGMMEFPL), 390-412 (ALSLGNAGGPLLIALLLGAMGRT), 425-447 (LALRQLGITMFLAAIGTTAGAGF), 457-479 (LLIIGVGALLTLVISVLVLVIGH), and 519-541 (YTSVYPLAMVAKIIAAQVLLFLL).

Belongs to the AAE transporter (TC 2.A.81) family.

It localises to the cell membrane. This is an uncharacterized protein from Corynebacterium efficiens (strain DSM 44549 / YS-314 / AJ 12310 / JCM 11189 / NBRC 100395).